The sequence spans 450 residues: Phospho-2-dehydro-3-deoxyheptonate aldolase (450 aa).

Over residues 1–13 (MTVNAKTSPSAGN) the composition is skewed to polar residues. A disordered region spans residues 1–20 (MTVNAKTSPSAGNTWRDLPA).

The protein belongs to the class-II DAHP synthase family. Homodimer.

The enzyme catalyses D-erythrose 4-phosphate + phosphoenolpyruvate + H2O = 7-phospho-2-dehydro-3-deoxy-D-arabino-heptonate + phosphate. The protein operates within metabolic intermediate biosynthesis; chorismate biosynthesis; chorismate from D-erythrose 4-phosphate and phosphoenolpyruvate: step 1/7. This Streptomyces coelicolor (strain ATCC BAA-471 / A3(2) / M145) protein is Phospho-2-dehydro-3-deoxyheptonate aldolase (aroH).